The chain runs to 255 residues: Ly6/PLAUR domain-containing protein 8 (255 aa).

The signal sequence occupies residues 1–20; it reads MRGVFIAGVIAAFAITVVDS. 13 N-linked (GlcNAc...) asparagine glycosylation sites follow: Asn-22, Asn-30, Asn-53, Asn-72, Asn-76, Asn-105, Asn-115, Asn-128, Asn-154, Asn-169, Asn-179, Asn-200, and Asn-210. The 50-residue stretch at 121-170 folds into the UPAR/Ly6 domain; that stretch reads CMSCYGHNKTLCEEKPQKCYEGEQCVFIIAEMVNGSGRVELKGCSDISNS. Ser-233 carries GPI-anchor amidated serine lipidation. A propeptide spans 234–255 (removed in mature form); sequence MGTKASFTSSIFGSLLLLKLLF.

Belongs to the CNF-like-inhibitor family. In terms of processing, highly N-glycosylated. Not O-glycosylated. GPI-anchored. The GPI-anchor is cleaved, leading to secretion into the colonic lumen. As to expression, specifically present in enterocytes located at the uppermost epithelial layer of the colon (at protein level). Exclusively expressed in the large intestine: specifically expressed on the apical surface of epithelial cells located at the uppermost layer of the colonic gland.

Its subcellular location is the cell membrane. The protein localises to the secreted. Functionally, secreted protein specifically required to prevent invasion of Gram-negative bacteria in the inner mucus layer of the colon epithelium, a portion of the large intestine which is free of commensal microbiota. Prevents invasion of flagellated microbiota by binding to the flagellum of bacteria, such as P.mirabilis, thereby inhibiting bacterial motility in the intestinal lumen. Segregation of intestinal bacteria and epithelial cells in the colon is required to preserve intestinal homeostasis. The sequence is that of Ly6/PLAUR domain-containing protein 8 from Mus musculus (Mouse).